A 1297-amino-acid polypeptide reads, in one-letter code: Phosphoribosylformylglycinamidine synthase (1297 aa).

A disordered region spans residues 303–329; that stretch reads ISPFPGAATGSGGEIRDEGATGRGAKP. 308–319 contacts ATP; it reads GAATGSGGEIRD. Mg(2+) is bound by residues Asp680, Glu719, Asn723, and Asp887. Ser889 provides a ligand contact to ATP. Residues 1045–1297 enclose the Glutamine amidotransferase type-1 domain; the sequence is IAILREQGVN…RLFRNARMVF (253 aa). Cys1138 acts as the Nucleophile in catalysis. Residues His1263 and Glu1265 contribute to the active site.

This sequence in the N-terminal section; belongs to the FGAMS family. In terms of assembly, monomer.

The protein resides in the cytoplasm. The catalysed reaction is N(2)-formyl-N(1)-(5-phospho-beta-D-ribosyl)glycinamide + L-glutamine + ATP + H2O = 2-formamido-N(1)-(5-O-phospho-beta-D-ribosyl)acetamidine + L-glutamate + ADP + phosphate + H(+). It functions in the pathway purine metabolism; IMP biosynthesis via de novo pathway; 5-amino-1-(5-phospho-D-ribosyl)imidazole from N(2)-formyl-N(1)-(5-phospho-D-ribosyl)glycinamide: step 1/2. Functionally, phosphoribosylformylglycinamidine synthase involved in the purines biosynthetic pathway. Catalyzes the ATP-dependent conversion of formylglycinamide ribonucleotide (FGAR) and glutamine to yield formylglycinamidine ribonucleotide (FGAM) and glutamate. The sequence is that of Phosphoribosylformylglycinamidine synthase from Haemophilus influenzae (strain 86-028NP).